Reading from the N-terminus, the 437-residue chain is Methylenetetrahydrofolate--tRNA-(uracil-5-)-methyltransferase TrmFO (437 aa).

Residue 10–15 (GAGLAG) coordinates FAD.

Belongs to the MnmG family. TrmFO subfamily. The cofactor is FAD.

It localises to the cytoplasm. It catalyses the reaction uridine(54) in tRNA + (6R)-5,10-methylene-5,6,7,8-tetrahydrofolate + NADH + H(+) = 5-methyluridine(54) in tRNA + (6S)-5,6,7,8-tetrahydrofolate + NAD(+). The catalysed reaction is uridine(54) in tRNA + (6R)-5,10-methylene-5,6,7,8-tetrahydrofolate + NADPH + H(+) = 5-methyluridine(54) in tRNA + (6S)-5,6,7,8-tetrahydrofolate + NADP(+). In terms of biological role, catalyzes the folate-dependent formation of 5-methyl-uridine at position 54 (M-5-U54) in all tRNAs. This chain is Methylenetetrahydrofolate--tRNA-(uracil-5-)-methyltransferase TrmFO, found in Pelotomaculum thermopropionicum (strain DSM 13744 / JCM 10971 / SI).